Consider the following 84-residue polypeptide: UPF0248 protein PF1300 (84 aa).

The protein belongs to the UPF0248 family.

The protein is UPF0248 protein PF1300 of Pyrococcus furiosus (strain ATCC 43587 / DSM 3638 / JCM 8422 / Vc1).